Consider the following 301-residue polypeptide: Chitosanase (301 aa).

An N-terminal signal peptide occupies residues 1-42 (MHMSNARPSKSRTKFLLAFLCFTLMASLFGATALFGPSKAAA). E79 serves as the catalytic Proton donor. The cysteines at positions 92 and 166 are disulfide-linked. The active-site Nucleophile is the D97.

This sequence belongs to the glycosyl hydrolase 46 family.

The protein localises to the secreted. The catalysed reaction is Endohydrolysis of beta-(1-&gt;4)-linkages between D-glucosamine residues in a partly acetylated chitosan.. Functionally, aids in the defense against invading fungal pathogens by degrading their cell wall chitosan. The sequence is that of Chitosanase (csn) from Niallia circulans (Bacillus circulans).